The primary structure comprises 315 residues: MQIALAPMEGLVDEILRDVLTRIGGIDWCVTEFIRVSERLLPAATYHKLAPELFNGSRTRAGTPMRVQFLGSDPQCLADNAAFACTLGAPVIDLNFGCPAKTVNKSRGGAVLLKEPELLHAIVREVRRTVPAEIPVTAKMRLGFEGKEGALDCARALAEGGASQIVVHARTKVEGYKPPAHWEWVARVQEVVGVPVFANGEVWTLDDWRRCREISGVDDIMLGRGLVSRPGLARQIAAVRAGEEPEDMSWAELQPLLLDFWQQARRKLAPRYAPGRLKQWLAMLTRTYPEAVALFAEVRREQDCERIDQLLALSP.

FMN contacts are provided by residues 7–9 (PME) and Gln68. The Proton donor role is filled by Cys98. Residues Lys139, 199 to 201 (NGE), and 223 to 224 (GR) contribute to the FMN site.

The protein belongs to the Dus family. DusC subfamily. The cofactor is FMN.

It carries out the reaction 5,6-dihydrouridine(16) in tRNA + NADP(+) = uridine(16) in tRNA + NADPH + H(+). It catalyses the reaction 5,6-dihydrouridine(16) in tRNA + NAD(+) = uridine(16) in tRNA + NADH + H(+). Catalyzes the synthesis of 5,6-dihydrouridine (D), a modified base found in the D-loop of most tRNAs, via the reduction of the C5-C6 double bond in target uridines. Specifically modifies U16 in tRNAs. This chain is tRNA-dihydrouridine(16) synthase, found in Aquipseudomonas alcaligenes (Pseudomonas alcaligenes).